Here is an 87-residue protein sequence, read N- to C-terminus: MVKKSFILVIPQEEKKGSVEFQVSSFTNKIRRLTSHLELHRKDYLSQRGLRRILGKRQRLLAYLSKKNRVRYKELISQLDIREPKTH.

It belongs to the universal ribosomal protein uS15 family. As to quaternary structure, part of the 30S ribosomal subunit.

Its subcellular location is the plastid. The protein resides in the chloroplast. This is Small ribosomal subunit protein uS15c (rps15) from Illicium oligandrum (Star anise).